Consider the following 205-residue polypeptide: Peptidyl-tRNA hydrolase (205 aa).

TRNA is bound at residue tyrosine 18. Catalysis depends on histidine 23, which acts as the Proton acceptor. 3 residues coordinate tRNA: tyrosine 69, asparagine 71, and asparagine 117.

It belongs to the PTH family. As to quaternary structure, monomer.

Its subcellular location is the cytoplasm. The catalysed reaction is an N-acyl-L-alpha-aminoacyl-tRNA + H2O = an N-acyl-L-amino acid + a tRNA + H(+). Hydrolyzes ribosome-free peptidyl-tRNAs (with 1 or more amino acids incorporated), which drop off the ribosome during protein synthesis, or as a result of ribosome stalling. In terms of biological role, catalyzes the release of premature peptidyl moieties from peptidyl-tRNA molecules trapped in stalled 50S ribosomal subunits, and thus maintains levels of free tRNAs and 50S ribosomes. The chain is Peptidyl-tRNA hydrolase from Thermosynechococcus vestitus (strain NIES-2133 / IAM M-273 / BP-1).